Here is a 220-residue protein sequence, read N- to C-terminus: Protein-methionine-sulfoxide reductase heme-binding subunit MsrQ (220 aa).

The next 5 membrane-spanning stretches (helical) occupy residues 20 to 40 (IWLLYAVGFVPAVWTFYLGAS), 52 to 72 (EHTLGLWALRFLILTLMVTPI), 86 to 106 (ALGLLAFYYALMHFATYMVLD), 122 to 142 (PFITIGMISLVLLVPLALTSN), and 159 to 179 (LVYVAIAGGAIHFIMSVKSWP).

It belongs to the MsrQ family. As to quaternary structure, heterodimer of a catalytic subunit (MsrP) and a heme-binding subunit (MsrQ). FMN is required as a cofactor. It depends on heme b as a cofactor.

Its subcellular location is the cell inner membrane. Its function is as follows. Part of the MsrPQ system that repairs oxidized periplasmic proteins containing methionine sulfoxide residues (Met-O), using respiratory chain electrons. Thus protects these proteins from oxidative-stress damage caused by reactive species of oxygen and chlorine generated by the host defense mechanisms. MsrPQ is essential for the maintenance of envelope integrity under bleach stress, rescuing a wide series of structurally unrelated periplasmic proteins from methionine oxidation. MsrQ provides electrons for reduction to the reductase catalytic subunit MsrP, using the quinone pool of the respiratory chain. The protein is Protein-methionine-sulfoxide reductase heme-binding subunit MsrQ of Brucella anthropi (strain ATCC 49188 / DSM 6882 / CCUG 24695 / JCM 21032 / LMG 3331 / NBRC 15819 / NCTC 12168 / Alc 37) (Ochrobactrum anthropi).